The following is a 221-amino-acid chain: GTP-binding nuclear protein Ran-3 (221 aa).

Positions 10-174 (DYPSFKLVIV…LYLARKLAGD (165 aa)) constitute a Small GTPase Ran-type domain. Position 21–28 (21–28 (DGGTGKTT)) interacts with GTP. Residues 40 to 48 (KKYEPTIGV) form a switch-I region. GTP contacts are provided by residues Gly-71, 125-128 (NKVD), and 153-155 (SAK). The switch-II stretch occupies residues 71 to 87 (GQEKFGGLRDGYYIHGQ). The interval 201–221 (EAELAAAASQPLPDDDDDTFE) is disordered.

This sequence belongs to the small GTPase superfamily. Ran family. In terms of assembly, found in a nuclear export complex with RanGTP, exportin and pre-miRNA. Interacts with RanBP1a and RanBP1b. Interacts with KPNB1.

The protein localises to the nucleus. Its function is as follows. GTP-binding protein involved in nucleocytoplasmic transport. Required for the import of protein into the nucleus and also for RNA export. Involved in chromatin condensation and control of cell cycle. This Arabidopsis thaliana (Mouse-ear cress) protein is GTP-binding nuclear protein Ran-3 (RAN3).